The primary structure comprises 208 residues: Germin-like protein subfamily 3 member 1 (208 aa).

Residues 1–18 (MLRTIFLLSLLFALSNAS) form the signal peptide. Cys23 and Cys38 are oxidised to a cystine. The region spanning 52 to 198 (SGLGTPGNTT…TTFLDATTVK (147 aa)) is the Cupin type-1 domain. An N-linked (GlcNAc...) asparagine glycan is attached at Asn59. Mn(2+) contacts are provided by His100, His102, Glu107, and His146.

Belongs to the germin family. May not form oligomer. Expressed during germination, and also in green shoots, etiolated seedlings and whole seedlings.

Its subcellular location is the secreted. It localises to the extracellular space. It is found in the apoplast. Its function is as follows. May play a role in plant defense. Probably has no oxalate oxidase activity even if the active site is conserved. This is Germin-like protein subfamily 3 member 1 (GLP1) from Arabidopsis thaliana (Mouse-ear cress).